The primary structure comprises 272 residues: Arylesterase (272 aa).

Residues 21–253 (KPVLFSHGWL…LKVYKDAPHG (233 aa)) enclose the AB hydrolase-1 domain. W29 provides a ligand contact to acetate. Residue S95 is part of the active site. M96 provides a ligand contact to acetate. Residues D223 and H252 contribute to the active site.

It belongs to the AB hydrolase superfamily. Bacterial non-heme haloperoxidase / perhydrolase family. In terms of assembly, dimer of trimers.

It carries out the reaction a phenyl acetate + H2O = a phenol + acetate + H(+). The enzyme catalyses peracetic acid + H2O = acetate + H2O2 + H(+). The catalysed reaction is a percarboxylic acid + H2O = a carboxylate + H2O2 + H(+). In terms of biological role, hydrolyzes phenolic esters, such as phenyl acetate, nitrophenyl acetate and naphtyl acetate. Can act on a wide range of esters, but reaction rate and enantioselectivity differ significantly depending on the substrate. Shows a preference for esters with small acyl groups. Also shows low perhydrolase activity, and catalyzes the reversible formation of peroxycarboxylic acids from carboxylic acids and hydrogen peroxide. In vitro, enzyme-generated peracetic acid oxidizes bromide ion to bromonium, which reacts with monochlorodimedone to form bromochlorodimedone. This chain is Arylesterase, found in Pseudomonas fluorescens.